Consider the following 500-residue polypeptide: E3 ubiquitin-protein ligase TRIM69 (500 aa).

Residues 1–152 (MEVSTNPSSN…SVGQSKEFLQ (152 aa)) are necessary for nuclear localization. An RING-type zinc finger spans residues 41 to 82 (CPLCNDWFRDPLMLSCGHNFCEACIQDFWRLQAKETFCPECK). A coiled-coil region spans residues 161 to 255 (TEELAIQQGQ…QCLLAKDMLV (95 aa)). Residues 305–500 (PIQYMVWREM…KEPLHILHPQ (196 aa)) enclose the B30.2/SPRY domain. Position 341 is a phosphoserine (serine 341).

This sequence belongs to the TRIM/RBCC family. As to quaternary structure, homo-multimer; required for antiviral activity. Interacts with PML. Post-translationally, phosphorylated. Phosphorylation is necessary for nuclear localization.

The protein resides in the cytoplasm. It localises to the nucleus. Its subcellular location is the nucleus speckle. The protein localises to the cytoskeleton. It is found in the microtubule organizing center. The protein resides in the centrosome. It carries out the reaction S-ubiquitinyl-[E2 ubiquitin-conjugating enzyme]-L-cysteine + [acceptor protein]-L-lysine = [E2 ubiquitin-conjugating enzyme]-L-cysteine + N(6)-ubiquitinyl-[acceptor protein]-L-lysine.. It functions in the pathway protein modification; protein ubiquitination. Functionally, E3 ubiquitin ligase that plays an important role in antiviral immunity by restricting different viral infections including dengue virus or vesicular stomatitis indiana virus. Ubiquitinates viral proteins such as dengue virus NS3 thereby limiting infection. In addition, acts as a key mediator of type I interferon induced microtubule stabilization by directly associating to microtubules independently of its E3 ligase activity. Also plays a role in cataract formation together with TP53. Mechanistically, inhibits UVB-induced cell apoptosis and reactive oxygen species (ROS) production by inducing TP53 ubiquitination. Regulates centrosome dynamics and mitotic progression by ubiquitinating STK3/MST2; leading to its redistribution to the perinuclear cytoskeleton and subsequent phosphorylation by PLK1. This is E3 ubiquitin-protein ligase TRIM69 (TRIM69) from Homo sapiens (Human).